The chain runs to 559 residues: Putative ankyrin repeat protein RBE_0902 (559 aa).

10 ANK repeats span residues 11–40 (DGWT…EQAI), 46–75 (DGNT…DQAI), 81–110 (DGNT…TKQN), 158–189 (DDWT…VINH), 228–257 (NNDT…DQAI), 263–292 (DGNT…DQAI), 298–327 (YGNT…EQAI), 333–364 (QCDT…AINC), 372–402 (FGFT…EVII), and 524–554 (IDNN…WGLE).

The sequence is that of Putative ankyrin repeat protein RBE_0902 from Rickettsia bellii (strain RML369-C).